The following is a 330-amino-acid chain: tRNA-modifying protein YgfZ (330 aa).

Residues W28 and W192 each coordinate folate.

It belongs to the tRNA-modifying YgfZ family.

The protein localises to the cytoplasm. Its function is as follows. Folate-binding protein involved in regulating the level of ATP-DnaA and in the modification of some tRNAs. It is probably a key factor in regulatory networks that act via tRNA modification, such as initiation of chromosomal replication. This Blochmanniella pennsylvanica (strain BPEN) protein is tRNA-modifying protein YgfZ.